Here is a 487-residue protein sequence, read N- to C-terminus: Probable aspartic-type endopeptidase opsB (487 aa).

Positions 1–20 (MQKSWLVLLVACLGLQGTTA) are cleaved as a signal peptide. Residues 69–398 (YFCNITLGTP…DLSNNEISLA (330 aa)) enclose the Peptidase A1 domain. N-linked (GlcNAc...) asparagine glycosylation occurs at Asn-72. Asp-87 is a catalytic residue. Residues Asn-99, Asn-111, Asn-132, and Asn-272 are each glycosylated (N-linked (GlcNAc...) asparagine). Residue Asp-286 is part of the active site. Asn-329 and Asn-403 each carry an N-linked (GlcNAc...) asparagine glycan. Ala-463 carries GPI-anchor amidated alanine lipidation. The propeptide at 464–487 (PAGPTDVPKHLVLGAAAIGYVLAF) is removed in mature form.

Belongs to the peptidase A1 family.

The protein localises to the cell membrane. Functionally, probable GPI-anchored aspartic-type endopeptidase. The polypeptide is Probable aspartic-type endopeptidase opsB (opsB) (Aspergillus oryzae (strain ATCC 42149 / RIB 40) (Yellow koji mold)).